The following is a 112-amino-acid chain: Large ribosomal subunit protein uL22 (112 aa).

This sequence belongs to the universal ribosomal protein uL22 family. Part of the 50S ribosomal subunit.

Its function is as follows. This protein binds specifically to 23S rRNA; its binding is stimulated by other ribosomal proteins, e.g. L4, L17, and L20. It is important during the early stages of 50S assembly. It makes multiple contacts with different domains of the 23S rRNA in the assembled 50S subunit and ribosome. Functionally, the globular domain of the protein is located near the polypeptide exit tunnel on the outside of the subunit, while an extended beta-hairpin is found that lines the wall of the exit tunnel in the center of the 70S ribosome. In Legionella pneumophila subsp. pneumophila (strain Philadelphia 1 / ATCC 33152 / DSM 7513), this protein is Large ribosomal subunit protein uL22.